The sequence spans 222 residues: Probable transaldolase (222 aa).

Lys91 serves as the catalytic Schiff-base intermediate with substrate.

Belongs to the transaldolase family. Type 3B subfamily.

Its subcellular location is the cytoplasm. It catalyses the reaction D-sedoheptulose 7-phosphate + D-glyceraldehyde 3-phosphate = D-erythrose 4-phosphate + beta-D-fructose 6-phosphate. The protein operates within carbohydrate degradation; pentose phosphate pathway; D-glyceraldehyde 3-phosphate and beta-D-fructose 6-phosphate from D-ribose 5-phosphate and D-xylulose 5-phosphate (non-oxidative stage): step 2/3. Transaldolase is important for the balance of metabolites in the pentose-phosphate pathway. The chain is Probable transaldolase from Chlorobium limicola (strain DSM 245 / NBRC 103803 / 6330).